The chain runs to 457 residues: Karyogamy meiotic segregation protein 2 (457 aa).

The residue at position 134 (serine 134) is a Phosphoserine.

In terms of assembly, interacts with sad1.

Its subcellular location is the cytoplasm. It is found in the cytoskeleton. It localises to the microtubule organizing center. The protein resides in the spindle pole body. This chain is Karyogamy meiotic segregation protein 2 (kms2), found in Schizosaccharomyces pombe (strain 972 / ATCC 24843) (Fission yeast).